Reading from the N-terminus, the 1045-residue chain is Suppression of tumorigenicity 18 protein (1045 aa).

Disordered regions lie at residues 38–90 (KKRR…NDHA), 158–228 (KAES…YNRK), and 340–364 (PRVTDANGRQIFTNKHSPRPERREA). Over residues 52–63 (NKRKSLLMKPRH) the composition is skewed to basic residues. Basic and acidic residues-rich tracts occupy residues 69–90 (GCKESPDNRNEDDGLLETNDHA) and 159–177 (AESDEAHEGSMVHSDNGRD). CCHHC-type zinc fingers lie at residues 357–400 (PRPE…PLEI), 401–444 (LAMH…KLAM), 713–756 (RDLK…LKSL), 757–800 (MAAN…GIKM), 805–848 (EEKE…QKEN), and 858–901 (KLNK…IKKV). Zn(2+) is bound by residues C366, C371, H384, C390, C410, C415, H428, C434, C722, C727, H740, C746, C766, C771, H784, C790, C814, C819, H832, C838, C867, C872, H885, and C891. The stretch at 918–987 (IDGDEEIRHL…KELAGLSQAL (70 aa)) forms a coiled coil.

The protein belongs to the MYT1 family.

It is found in the nucleus. Repressor that binds to DNA sequences containing a bipartite element consisting of a direct repeat of the sequence 5'-AAAGTTT-3' separated by 2-9 nucleotides. Represses basal transcription activity from target promoters. This Mus musculus (Mouse) protein is Suppression of tumorigenicity 18 protein (St18).